The chain runs to 238 residues: Ribonuclease 3 (238 aa).

An RNase III domain is found at 4–130; the sequence is IQTLFQTLNI…LFGAIYLDLG (127 aa). E45 lines the Mg(2+) pocket. The active site involves D49. The Mg(2+) site is built by D116 and E119. Residue E119 is part of the active site. Residues 154-222 form the DRBM domain; sequence DFKTQLQEIV…AQQALSKVAK (69 aa). The disordered stretch occupies residues 215–238; that stretch reads QALSKVAKPKDLLNNKGGKEKELQ. Residues 222-238 show a composition bias toward basic and acidic residues; the sequence is KPKDLLNNKGGKEKELQ.

The protein belongs to the ribonuclease III family. Homodimer. Requires Mg(2+) as cofactor.

It is found in the cytoplasm. It carries out the reaction Endonucleolytic cleavage to 5'-phosphomonoester.. Digests double-stranded RNA. Involved in the processing of primary rRNA transcript to yield the immediate precursors to the large and small rRNAs (23S and 16S). Processes some mRNAs, and tRNAs when they are encoded in the rRNA operon. Processes pre-crRNA and tracrRNA of type II CRISPR loci if present in the organism. The polypeptide is Ribonuclease 3 (Onion yellows phytoplasma (strain OY-M)).